Consider the following 716-residue polypeptide: Mitochondrial Rho GTPase 1 (716 aa).

Over 1-692 (MSPDAIRVVV…VSVDQDDIKH (692 aa)) the chain is Cytoplasmic. The region spanning 3 to 224 (PDAIRVVVCG…FYLCQRAVTH (222 aa)) is the Miro 1 domain. The disordered stretch occupies residues 58–99 (NDQDHHHHHQSSPSTMKNKRKHNNKRERERERESSINNVQPN). GTP is bound by residues 84–91 (ERERERES), 113–115 (DTS), and 167–170 (NKSD). The EF-hand 1 domain occupies 240–275 (GAIKPLKRIFWLSDTDQDGYLNFEELSELHKKCFGI). Asp-253, Asp-255, Asp-257, Tyr-259, and Glu-264 together coordinate Ca(2+). The disordered stretch occupies residues 303-327 (TQTPPQQQHLATSAGTPNGTTTTTS). In terms of domain architecture, EF-hand 2 spans 388–423 (TGYKFFVDLFIKFDKDNDGGLNEDELNTLFRSTPGI). Ca(2+) contacts are provided by Asp-401, Asp-403, Asp-405, and Glu-412. Residues 505–671 (RNVFNCFIVG…FIQLVDAAKT (167 aa)) enclose the Miro 2 domain. GTP-binding positions include 514-521 (GAPKAGKS), 550-554 (ELRGG), and 620-623 (LKAD). The chain crosses the membrane as a helical; Anchor for type IV membrane protein span at residues 693-713 (IIMTGAAIAVVGLVSIWVLNS). The Mitochondrial intermembrane portion of the chain corresponds to 714–716 (LRR).

Belongs to the mitochondrial Rho GTPase family.

It localises to the mitochondrion outer membrane. Functionally, mitochondrial GTPase involved in mitochondrial trafficking. Probably involved in control of anterograde transport of mitochondria and their subcellular distribution. The sequence is that of Mitochondrial Rho GTPase 1 (GEM1) from Candida albicans (strain SC5314 / ATCC MYA-2876) (Yeast).